The chain runs to 349 residues: Eukaryotic translation initiation factor 3 subunit I (349 aa).

WD repeat units follow at residues 8-49 (GHER…GTLE), 51-91 (HIGT…QSWE), 93-135 (PTPV…DYTK), 148-187 (SDAK…FIET), 197-239 (EKIA…KVYK), and 295-336 (GHFG…FEFD).

This sequence belongs to the eIF-3 subunit I family. In terms of assembly, component of the eukaryotic translation initiation factor 3 (eIF-3) complex.

It is found in the cytoplasm. In terms of biological role, component of the eukaryotic translation initiation factor 3 (eIF-3) complex, which is involved in protein synthesis of a specialized repertoire of mRNAs and, together with other initiation factors, stimulates binding of mRNA and methionyl-tRNAi to the 40S ribosome. The eIF-3 complex specifically targets and initiates translation of a subset of mRNAs involved in cell proliferation. The chain is Eukaryotic translation initiation factor 3 subunit I from Debaryomyces hansenii (strain ATCC 36239 / CBS 767 / BCRC 21394 / JCM 1990 / NBRC 0083 / IGC 2968) (Yeast).